The chain runs to 201 residues: Probable GTP-binding protein EngB (201 aa).

The 171-residue stretch at 21–191 (AAPQIILAGR…WNLLDVTAIP (171 aa)) folds into the EngB-type G domain. Residues 29–36 (GRSNVGKS), 56–60 (GKTRS), 75–78 (DLPG), 142–145 (TKSD), and 168–172 (ICVSS) contribute to the GTP site. Ser36 and Thr58 together coordinate Mg(2+).

This sequence belongs to the TRAFAC class TrmE-Era-EngA-EngB-Septin-like GTPase superfamily. EngB GTPase family. It depends on Mg(2+) as a cofactor.

Its function is as follows. Necessary for normal cell division and for the maintenance of normal septation. This chain is Probable GTP-binding protein EngB, found in Maridesulfovibrio salexigens (strain ATCC 14822 / DSM 2638 / NCIMB 8403 / VKM B-1763) (Desulfovibrio salexigens).